A 554-amino-acid chain; its full sequence is Dihydroxy-acid dehydratase (554 aa).

Mg(2+) is bound at residue Asp78. Cys119 contacts [2Fe-2S] cluster. Asp120 and Lys121 together coordinate Mg(2+). The residue at position 121 (Lys121) is an N6-carboxylysine. [2Fe-2S] cluster is bound at residue Cys191. Mg(2+) is bound at residue Glu444. The Proton acceptor role is filled by Ser470.

This sequence belongs to the IlvD/Edd family. Homodimer. The cofactor is [2Fe-2S] cluster. Requires Mg(2+) as cofactor.

The catalysed reaction is (2R)-2,3-dihydroxy-3-methylbutanoate = 3-methyl-2-oxobutanoate + H2O. The enzyme catalyses (2R,3R)-2,3-dihydroxy-3-methylpentanoate = (S)-3-methyl-2-oxopentanoate + H2O. The protein operates within amino-acid biosynthesis; L-isoleucine biosynthesis; L-isoleucine from 2-oxobutanoate: step 3/4. Its pathway is amino-acid biosynthesis; L-valine biosynthesis; L-valine from pyruvate: step 3/4. Functionally, functions in the biosynthesis of branched-chain amino acids. Catalyzes the dehydration of (2R,3R)-2,3-dihydroxy-3-methylpentanoate (2,3-dihydroxy-3-methylvalerate) into 2-oxo-3-methylpentanoate (2-oxo-3-methylvalerate) and of (2R)-2,3-dihydroxy-3-methylbutanoate (2,3-dihydroxyisovalerate) into 2-oxo-3-methylbutanoate (2-oxoisovalerate), the penultimate precursor to L-isoleucine and L-valine, respectively. This Nitratidesulfovibrio vulgaris (strain ATCC 29579 / DSM 644 / CCUG 34227 / NCIMB 8303 / VKM B-1760 / Hildenborough) (Desulfovibrio vulgaris) protein is Dihydroxy-acid dehydratase.